The chain runs to 366 residues: Peptide chain release factor 2 (366 aa).

At Q253 the chain carries N5-methylglutamine.

Belongs to the prokaryotic/mitochondrial release factor family. In terms of processing, methylated by PrmC. Methylation increases the termination efficiency of RF2.

Its subcellular location is the cytoplasm. Its function is as follows. Peptide chain release factor 2 directs the termination of translation in response to the peptide chain termination codons UGA and UAA. This is Peptide chain release factor 2 from Yersinia pestis.